A 275-amino-acid polypeptide reads, in one-letter code: Phosphate import ATP-binding protein PstB 1 (275 aa).

The region spanning 22–261 (IETRDLSVYY…DRTEKIFNSP (240 aa)) is the ABC transporter domain. 54 to 61 (GPSGCGKS) is an ATP binding site.

The protein belongs to the ABC transporter superfamily. Phosphate importer (TC 3.A.1.7) family. As to quaternary structure, the complex is composed of two ATP-binding proteins (PstB), two transmembrane proteins (PstC and PstA) and a solute-binding protein (PstS).

It is found in the cell inner membrane. It carries out the reaction phosphate(out) + ATP + H2O = ADP + 2 phosphate(in) + H(+). Part of the ABC transporter complex PstSACB involved in phosphate import. Responsible for energy coupling to the transport system. In Synechococcus sp. (strain JA-3-3Ab) (Cyanobacteria bacterium Yellowstone A-Prime), this protein is Phosphate import ATP-binding protein PstB 1.